The sequence spans 435 residues: Rho GTPase-activating protein 4 (435 aa).

A disordered region spans residues 1 to 59 (MAKVLKSSQSCHFPSPSSSSSTSCGGGNDGSNRDPHSPFNISRREEEEEEEERSEKERE). The segment covering 7 to 23 (SSQSCHFPSPSSSSSTS) has biased composition (low complexity). The CRIB domain occupies 93 to 106 (IGVPTDVRHVAHVT). The Rho-GAP domain occupies 138 to 319 (VSTESMQLSY…LIVKTLKDRK (182 aa)). The segment at 321 to 343 (SRDKLVPASNPSPRDHNGDQSSS) is disordered.

Acts as a GTPase activator for the Rac-type GTPase by converting it to an inactive GDP-bound state. Acts as a negative feedback regulator in tolerance to oxygen deprivation which requires ARAC4/ROP2. This is Rho GTPase-activating protein 4 (ROPGAP4) from Arabidopsis thaliana (Mouse-ear cress).